Reading from the N-terminus, the 642-residue chain is Rhotekin-2 (642 aa).

The REM-1 domain occupies 30-105 (IKRKKIRESM…AQKRTGHQDF (76 aa)). A PH domain is found at 306–413 (LDMMSGFLSQ…WLDSLWQHIY (108 aa)). 2 disordered regions span residues 505–563 (TVLS…GRPS) and 575–642 (LQKS…PKAW). 2 stretches are compositionally biased toward basic and acidic residues: residues 597–615 (PEKRAEESDLPEYTKKEYI) and 632–642 (SFREKMNPKAW).

This chain is Rhotekin-2 (rtkn2), found in Danio rerio (Zebrafish).